Consider the following 325-residue polypeptide: Apoptosis-enhancing nuclease (325 aa).

The Nucleolar localization signal signature appears at R27 to R35. The tract at residues R85–P105 is disordered. In terms of domain architecture, Exonuclease spans C110–Y266. Residues R165–K188 carry the Nuclear localization signal motif. The disordered stretch occupies residues L281–N325. Basic and acidic residues predominate over residues D308 to N325.

It localises to the nucleus. The protein resides in the nucleolus. In terms of biological role, exonuclease with activity against single- and double-stranded DNA and RNA. Mediates p53-induced apoptosis. When induced by p53 following DNA damage, digests double-stranded DNA to form single-stranded DNA and amplifies DNA damage signals, leading to enhancement of apoptosis. This chain is Apoptosis-enhancing nuclease (AEN), found in Homo sapiens (Human).